The chain runs to 148 residues: Hemoglobin subunit beta-A (148 aa).

The 146-residue stretch at 3–148 (DWTDAERAAI…VVSALGRQYH (146 aa)) folds into the Globin domain. H64 and H93 together coordinate heme b.

It belongs to the globin family. As to quaternary structure, heterotetramer of two alpha chains and two beta chains. As to expression, red blood cells.

In terms of biological role, involved in oxygen transport from gills to the various peripheral tissues. The sequence is that of Hemoglobin subunit beta-A (hbb1) from Seriola quinqueradiata (Five-ray yellowtail).